The following is a 187-amino-acid chain: Cytochrome b-245 chaperone 1 (187 aa).

The helical transmembrane segment at 20 to 42 (GIRSWSLLVGILSTGLAAAYYSG) threads the bilayer. The segment at 167–187 (ESPSERSQSSDSEPDGPGGQS) is disordered. 2 positions are modified to phosphoserine: S168 and S170.

It belongs to the CYBC1 family. Interacts with CYBB; CYBC1 may act as a chaperone stabilizing Cytochrome b-245 heterodimer.

The protein resides in the endoplasmic reticulum membrane. Functions as a chaperone necessary for a stable expression of the CYBA and CYBB subunits of the cytochrome b-245 heterodimer. Controls the phagocyte respiratory burst and is essential for innate immunity. The sequence is that of Cytochrome b-245 chaperone 1 from Rattus norvegicus (Rat).